A 296-amino-acid chain; its full sequence is ATP synthase gamma chain (296 aa).

This sequence belongs to the ATPase gamma chain family. As to quaternary structure, F-type ATPases have 2 components, CF(1) - the catalytic core - and CF(0) - the membrane proton channel. CF(1) has five subunits: alpha(3), beta(3), gamma(1), delta(1), epsilon(1). CF(0) has three main subunits: a, b and c.

It is found in the cell inner membrane. Functionally, produces ATP from ADP in the presence of a proton gradient across the membrane. The gamma chain is believed to be important in regulating ATPase activity and the flow of protons through the CF(0) complex. This Methylorubrum extorquens (strain PA1) (Methylobacterium extorquens) protein is ATP synthase gamma chain.